The sequence spans 284 residues: Tryptophan synthase alpha chain (284 aa).

Residues glutamate 59 and aspartate 70 each act as proton acceptor in the active site.

The protein belongs to the TrpA family. As to quaternary structure, tetramer of two alpha and two beta chains.

The enzyme catalyses (1S,2R)-1-C-(indol-3-yl)glycerol 3-phosphate + L-serine = D-glyceraldehyde 3-phosphate + L-tryptophan + H2O. It functions in the pathway amino-acid biosynthesis; L-tryptophan biosynthesis; L-tryptophan from chorismate: step 5/5. Its function is as follows. The alpha subunit is responsible for the aldol cleavage of indoleglycerol phosphate to indole and glyceraldehyde 3-phosphate. This Azospirillum brasilense protein is Tryptophan synthase alpha chain.